Here is a 93-residue protein sequence, read N- to C-terminus: MRCISRLPAVLLILSVALGHLRATPVGSGTNPQVDKRKCNTATCATQRLANFLVRSSNNLGPVLPPTNVGSNTYGKRNVAEDPNRESLDFLLL.

Positions 1-23 are cleaved as a signal peptide; that stretch reads MRCISRLPAVLLILSVALGHLRA. The propeptide occupies 24 to 35; it reads TPVGSGTNPQVD. Cys-39 and Cys-44 form a disulfide bridge. Tyr-74 carries the tyrosine amide modification. Positions 78-93 are excised as a propeptide; it reads NVAEDPNRESLDFLLL.

It belongs to the calcitonin family. In terms of assembly, can form homodimers. Interacts with IDE and INS. Interaction with INS inhibits homodimerization and fibril formation. In terms of tissue distribution, abundant in the islets of Langerhans but is not present in the brain or seven other tissues examined.

The protein localises to the secreted. Its function is as follows. Amylin/IAPP is a glucoregulatory peptide hormone that plays an important role in the regulation of energy homeostasis. Selectively inhibits insulin-stimulated glucose utilization and glycogen deposition in muscle, while not affecting adipocyte glucose metabolism. IAPP function is mediated by the CALCR-RAMPs (AMYRs) receptor complexes. Amylin can also bind CALCR receptor in the absence of RAMPs, although it is more selective for AMYRs. In Rattus norvegicus (Rat), this protein is Islet amyloid polypeptide.